Here is a 170-residue protein sequence, read N- to C-terminus: MSLPDKAFPVSWDQFHRDARALAWRIAGLDREWRAIVAITRGGLVPAAIICRELGIRLIETVCIASYHDYTSQGEMQVLKGIGASLLENQGEGVIVVDDLTDTGKTAAIVREMMPRAHFATVYAKPKGRPLIDTLRHGGLTGYLDLFPMGYGLHLSGADCWRKTRLNETK.

5-phospho-alpha-D-ribose 1-diphosphate-binding positions include 41–42 (RG) and 98–106 (DDLTDTGKT). Asp-99 lines the Mg(2+) pocket. Position 102 (Asp-102) interacts with guanine. A xanthine-binding site is contributed by Asp-102. 102–106 (DTGKT) is a GMP binding site.

It belongs to the purine/pyrimidine phosphoribosyltransferase family. XGPT subfamily. As to quaternary structure, homotetramer. Requires Mg(2+) as cofactor.

It localises to the cell inner membrane. It carries out the reaction GMP + diphosphate = guanine + 5-phospho-alpha-D-ribose 1-diphosphate. The catalysed reaction is XMP + diphosphate = xanthine + 5-phospho-alpha-D-ribose 1-diphosphate. It catalyses the reaction IMP + diphosphate = hypoxanthine + 5-phospho-alpha-D-ribose 1-diphosphate. It participates in purine metabolism; GMP biosynthesis via salvage pathway; GMP from guanine: step 1/1. It functions in the pathway purine metabolism; XMP biosynthesis via salvage pathway; XMP from xanthine: step 1/1. Functionally, purine salvage pathway enzyme that catalyzes the transfer of the ribosyl-5-phosphate group from 5-phospho-alpha-D-ribose 1-diphosphate (PRPP) to the N9 position of the 6-oxopurines guanine and xanthine to form the corresponding ribonucleotides GMP (guanosine 5'-monophosphate) and XMP (xanthosine 5'-monophosphate), with the release of PPi. To a lesser extent, also acts on hypoxanthine. The chain is Xanthine-guanine phosphoribosyltransferase from Brucella abortus (strain 2308).